Consider the following 490-residue polypeptide: Membrane-bound lytic murein transglycosylase F (490 aa).

Positions 1–32 are cleaved as a signal peptide; that stretch reads MFALTAYRLRCAAWLLATGIFLLLAGCSEAKA. Residues 33-269 are non-LT domain; sequence PTALERVQKE…RLKDRYYGHV (237 aa). The segment at 270-490 is LT domain; sequence DVLGYVGAYT…PDDDEGDGKL (221 aa). Glutamate 316 is an active-site residue. Residues 467–490 are disordered; that stretch reads AESGLHLPGVNKTRPDDDEGDGKL.

This sequence in the N-terminal section; belongs to the bacterial solute-binding protein 3 family. In the C-terminal section; belongs to the transglycosylase Slt family.

Its subcellular location is the cell outer membrane. It catalyses the reaction Exolytic cleavage of the (1-&gt;4)-beta-glycosidic linkage between N-acetylmuramic acid (MurNAc) and N-acetylglucosamine (GlcNAc) residues in peptidoglycan, from either the reducing or the non-reducing ends of the peptidoglycan chains, with concomitant formation of a 1,6-anhydrobond in the MurNAc residue.. Functionally, murein-degrading enzyme that degrades murein glycan strands and insoluble, high-molecular weight murein sacculi, with the concomitant formation of a 1,6-anhydromuramoyl product. Lytic transglycosylases (LTs) play an integral role in the metabolism of the peptidoglycan (PG) sacculus. Their lytic action creates space within the PG sacculus to allow for its expansion as well as for the insertion of various structures such as secretion systems and flagella. This chain is Membrane-bound lytic murein transglycosylase F, found in Pseudomonas paraeruginosa (strain DSM 24068 / PA7) (Pseudomonas aeruginosa (strain PA7)).